A 241-amino-acid chain; its full sequence is Uridylate kinase (241 aa).

14-17 is a binding site for ATP; sequence KLSG. Gly-56 contributes to the UMP binding site. ATP is bound by residues Gly-57 and Arg-61. UMP is bound by residues Asp-77 and 138–145; that span reads TGNPFFTT. Residues Thr-165, Tyr-171, and Asp-174 each coordinate ATP.

The protein belongs to the UMP kinase family. In terms of assembly, homohexamer.

The protein resides in the cytoplasm. It catalyses the reaction UMP + ATP = UDP + ADP. It functions in the pathway pyrimidine metabolism; CTP biosynthesis via de novo pathway; UDP from UMP (UMPK route): step 1/1. Inhibited by UTP. Its function is as follows. Catalyzes the reversible phosphorylation of UMP to UDP. The protein is Uridylate kinase of Psychrobacter cryohalolentis (strain ATCC BAA-1226 / DSM 17306 / VKM B-2378 / K5).